We begin with the raw amino-acid sequence, 196 residues long: Thymidylate kinase (196 aa).

ATP is bound at residue 7-14 (GIDGSGKT).

The protein belongs to the thymidylate kinase family.

It catalyses the reaction dTMP + ATP = dTDP + ADP. Functionally, phosphorylation of dTMP to form dTDP in both de novo and salvage pathways of dTTP synthesis. The polypeptide is Thymidylate kinase (Wolbachia pipientis wMel).